A 599-amino-acid chain; its full sequence is rRNA (cytosine-C(5))-methyltransferase NOP2C (599 aa).

The 108-residue stretch at 158-265 folds into the PUA domain; that stretch reads PKEVLVSRKC…IAVDLNHRVF (108 aa). Residues 304–310, aspartate 328, and aspartate 355 contribute to the S-adenosyl-L-methionine site; that span reads CAAPGGK. A disordered region spans residues 372–454; it reads LINGDNSSSM…GGRAGKSQGF (83 aa). Over residues 378–388 the composition is skewed to low complexity; sequence SSSMTSHSELS. The span at 399-412 shows a compositional bias: basic and acidic residues; sequence RRSEADKSCEKNDS. Polar residues predominate over residues 413-424; that stretch reads TEQPNGGDNVSQ. The span at 428–438 shows a compositional bias: basic residues; the sequence is RKNKGRLKNGR. Aspartate 465 contacts S-adenosyl-L-methionine. The active-site Nucleophile is cysteine 516.

Belongs to the class I-like SAM-binding methyltransferase superfamily. RsmB/NOP family.

It localises to the nucleus. The protein localises to the nucleolus. It catalyses the reaction a cytidine in rRNA + S-adenosyl-L-methionine = a 5-methylcytidine in rRNA + S-adenosyl-L-homocysteine + H(+). Functionally, involved in ribosomal large subunit assembly. S-adenosyl-L-methionine-dependent methyltransferase that may methylates the C(5) position of cytosine in rRNA. May play a role in the regulation of the cell cycle and the increased nucleolar activity that is associated with the cell proliferation. Seems involved in the regulation of cell proliferation. This chain is rRNA (cytosine-C(5))-methyltransferase NOP2C, found in Arabidopsis thaliana (Mouse-ear cress).